Consider the following 310-residue polypeptide: Keratin, type II cytoskeletal 8 (310 aa).

The tract at residues 1 to 38 (QRTLKVSSSGPRSFSSRSFSSGPSSRISSSSYSRVGSN) is disordered. A Glycyl lysine isopeptide (Lys-Gly) (interchain with G-Cter in SUMO2) cross-link involves residue K5. A phosphoserine mark is found at S7, S9, S15, and S16. The segment covering 7–38 (SSSGPRSFSSRSFSSGPSSRISSSSYSRVGSN) has biased composition (low complexity). R17 is subject to Omega-N-methylarginine. 3 positions are modified to phosphoserine: S18, S21, and S25. Position 26 is an omega-N-methylarginine (R26). Residues S28, S31, and S33 each carry the phosphoserine modification. An Omega-N-methylarginine modification is found at R34. Phosphoserine is present on S37. At R42 the chain carries Asymmetric dimethylarginine; alternate. R42 carries the post-translational modification Omega-N-methylarginine; alternate. The interval 92–127 (EKEQIKTLNNKFASFIDKVRFLEQQNKILETKWSFL) is coil 1A. The region spanning 92–310 (EKEQIKTLNN…LRHTKTEISE (219 aa)) is the IF rod domain. At K102 the chain carries N6-malonyllysine. Residues K123 and K131 each participate in a glycyl lysine isopeptide (Lys-Gly) (interchain with G-Cter in SUMO2) cross-link. The segment at 128–144 (QQQKTSQSNLDGLFEKY) is linker 1. A coil 1B region spans residues 145 to 236 (ITNLRRQLDS…HLYEEEIKEM (92 aa)). K198 is covalently cross-linked (Glycyl lysine isopeptide (Lys-Gly) (interchain with G-Cter in SUMO1); alternate). K198 participates in a covalent cross-link: Glycyl lysine isopeptide (Lys-Gly) (interchain with G-Cter in SUMO2); alternate. K208 carries the post-translational modification N6-acetyllysine. The residue at position 229 (Y229) is a Phosphotyrosine. The interval 237 to 260 (QSQISDTSVVVSMDNSRSLDLDGI) is linker 12. A phosphoserine mark is found at S254 and S275. The interval 261 to 310 (IADVRAQYEEIANRSRAEAETMYQIKYEELQLLAGKHGDDLRHTKTEISE) is coil 2. K286 is covalently cross-linked (Glycyl lysine isopeptide (Lys-Gly) (interchain with G-Cter in SUMO2)). K296 is covalently cross-linked (Glycyl lysine isopeptide (Lys-Gly) (interchain with G-Cter in SUMO2); alternate). Position 296 is an N6-acetyllysine; alternate (K296). K305 is covalently cross-linked (Glycyl lysine isopeptide (Lys-Gly) (interchain with G-Cter in SUMO2)).

This sequence belongs to the intermediate filament family. As to quaternary structure, heterotetramer of two type I and two type II keratins. Forms a heterodimer with KRT18. Associates with KRT20. Interacts with PNN. When associated with KRT19, interacts with DMD. Interacts with APEX1. Interacts with GPER1. Interacts with EPPK1. Interacts with PKP1 and PKP2. O-glycosylated. O-GlcNAcylation at multiple sites increases solubility, and decreases stability by inducing proteasomal degradation. Post-translationally, O-glycosylated (O-GlcNAcylated), in a cell cycle-dependent manner.

It localises to the cytoplasm. It is found in the nucleus. The protein localises to the nucleoplasm. The protein resides in the nucleus matrix. In terms of biological role, together with KRT19, helps to link the contractile apparatus to dystrophin at the costameres of striated muscle. The polypeptide is Keratin, type II cytoskeletal 8 (Potorous tridactylus (Potoroo)).